We begin with the raw amino-acid sequence, 456 residues long: Two pore potassium channel c (456 aa).

Low complexity predominate over residues 1-19 (MDTEPLLSPLSPSPHLLHP). The interval 1–112 (MDTEPLLSPL…PPSLFDFIGG (112 aa)) is disordered. The Cytoplasmic segment spans residues 1-152 (MDTEPLLSPL…RNPPPPPRRP (152 aa)). Positions 52–67 (HPPPPPPPPPPPPPPP) are enriched in pro residues. Residues 153–173 (AIVLHAFLFLLAYLAMGVTFY) form a helical membrane-spanning segment. An intramembrane region (pore-forming) is located at residues 192–211 (DALYFCIVTLCTIGYGDITP). A helical membrane pass occupies residues 223–243 (FVLIGFGFVDILLSGMVSYVL). At 244–279 (DLQEHLLITALKNPRSVRKHRHNYIFDLKKGRMRVR) the chain is on the cytoplasmic side. A helical transmembrane segment spans residues 280-300 (MKVALALTVVAICVGVGAAVL). Positions 310–329 (DAVYLAVMSVTTVGYGDHAF) form an intramembrane region, pore-forming. A helical transmembrane segment spans residues 336 to 356 (LFASAWLLVSTLAVARAFLYL). Over 357 to 456 (AEMRIDKRHR…LNEKKKGKKS (100 aa)) the chain is Cytoplasmic. 2 EF-hand domains span residues 373-408 (LSRD…EMGK) and 412-447 (KDIM…VTDL). Residues Asp-386, Asp-388, Asn-390, Tyr-392, Glu-397, Asp-425, Lys-431, and Asp-436 each coordinate Ca(2+).

The protein belongs to the two pore domain potassium channel (TC 1.A.1.7) family. In terms of assembly, homodimer.

Its subcellular location is the membrane. Inward-rectifying potassium channel. The protein is Two pore potassium channel c (TPKC) of Oryza sativa subsp. japonica (Rice).